A 105-amino-acid chain; its full sequence is Small ribosomal subunit protein uS10 (105 aa).

It belongs to the universal ribosomal protein uS10 family. In terms of assembly, part of the 30S ribosomal subunit.

Its function is as follows. Involved in the binding of tRNA to the ribosomes. The sequence is that of Small ribosomal subunit protein uS10 from Arthrospira platensis (Spirulina platensis).